A 171-amino-acid polypeptide reads, in one-letter code: AN1-type zinc finger protein 2A (171 aa).

AN1-type zinc fingers lie at residues proline 4–valine 52 and lysine 94–serine 142. Zn(2+) contacts are provided by cysteine 10, cysteine 15, cysteine 25, cysteine 28, cysteine 33, histidine 36, histidine 42, cysteine 44, cysteine 100, cysteine 105, cysteine 115, cysteine 118, cysteine 123, histidine 126, histidine 132, and cysteine 134. Positions cysteine 134–lysine 171 are disordered. A compositionally biased stretch (low complexity) spans alanine 136 to alanine 151.

Its subcellular location is the cytoplasm. The protein localises to the nucleus. The protein is AN1-type zinc finger protein 2A (Zfand2a) of Mus musculus (Mouse).